The primary structure comprises 365 residues: uncharacterized protein (365 aa).

The next 3 helical transmembrane spans lie at 105-125 (TGNWFLVILFLALLWLRQCWL), 151-171 (ILTTLVTVGTTLGTPVFSLTI), and 187-207 (IFLIIFSVFSISLGLVSSLIF).

It is found in the cell membrane. This is an uncharacterized protein from Mycoplasma genitalium (strain ATCC 33530 / DSM 19775 / NCTC 10195 / G37) (Mycoplasmoides genitalium).